We begin with the raw amino-acid sequence, 98 residues long: Aspartyl/glutamyl-tRNA(Asn/Gln) amidotransferase subunit C (98 aa).

A disordered region spans residues 76–98 (QVLSGAPDAEDGRFKVPAILEED).

This sequence belongs to the GatC family. Heterotrimer of A, B and C subunits.

It catalyses the reaction L-glutamyl-tRNA(Gln) + L-glutamine + ATP + H2O = L-glutaminyl-tRNA(Gln) + L-glutamate + ADP + phosphate + H(+). The enzyme catalyses L-aspartyl-tRNA(Asn) + L-glutamine + ATP + H2O = L-asparaginyl-tRNA(Asn) + L-glutamate + ADP + phosphate + 2 H(+). Allows the formation of correctly charged Asn-tRNA(Asn) or Gln-tRNA(Gln) through the transamidation of misacylated Asp-tRNA(Asn) or Glu-tRNA(Gln) in organisms which lack either or both of asparaginyl-tRNA or glutaminyl-tRNA synthetases. The reaction takes place in the presence of glutamine and ATP through an activated phospho-Asp-tRNA(Asn) or phospho-Glu-tRNA(Gln). The chain is Aspartyl/glutamyl-tRNA(Asn/Gln) amidotransferase subunit C from Renibacterium salmoninarum (strain ATCC 33209 / DSM 20767 / JCM 11484 / NBRC 15589 / NCIMB 2235).